Consider the following 469-residue polypeptide: Spermatogenesis-associated protein 21 (469 aa).

Disordered regions lie at residues Met-1–Gln-76 and His-99–Pro-157. A compositionally biased stretch (basic and acidic residues) spans Glu-49 to Arg-61. Positions Ala-62–Ala-73 are enriched in low complexity. Over residues Ala-105–Ala-132 the composition is skewed to polar residues. Residues Ala-146–Pro-157 are compositionally biased toward pro residues. Positions Glu-198–Ala-225 form a coiled coil. The region spanning Val-255–Phe-290 is the EF-hand domain. Ca(2+) contacts are provided by Asp-268, Asn-270, Asp-272, Arg-274, and Asp-279. Residues Tyr-424–His-469 form a disordered region. A compositionally biased stretch (basic and acidic residues) spans Asn-450 to Lys-459.

Functionally, involved in the differentiation of haploid spermatids. This Homo sapiens (Human) protein is Spermatogenesis-associated protein 21 (SPATA21).